Reading from the N-terminus, the 129-residue chain is SPbeta prophage-derived protein NrdI (129 aa).

It belongs to the NrdI family.

Its function is as follows. Probably involved in ribonucleotide reductase function. In Bacillus subtilis (strain 168), this protein is SPbeta prophage-derived protein NrdI (nrdIB).